The primary structure comprises 314 residues: Methionyl-tRNA formyltransferase (314 aa).

Residue 110–113 (SLLP) participates in (6S)-5,6,7,8-tetrahydrofolate binding.

Belongs to the Fmt family.

The enzyme catalyses L-methionyl-tRNA(fMet) + (6R)-10-formyltetrahydrofolate = N-formyl-L-methionyl-tRNA(fMet) + (6S)-5,6,7,8-tetrahydrofolate + H(+). In terms of biological role, attaches a formyl group to the free amino group of methionyl-tRNA(fMet). The formyl group appears to play a dual role in the initiator identity of N-formylmethionyl-tRNA by promoting its recognition by IF2 and preventing the misappropriation of this tRNA by the elongation apparatus. This Lactobacillus johnsonii (strain CNCM I-12250 / La1 / NCC 533) protein is Methionyl-tRNA formyltransferase.